The chain runs to 251 residues: uncharacterized protein (251 aa).

It localises to the mitochondrion. This is an uncharacterized protein from Arabidopsis thaliana (Mouse-ear cress).